Consider the following 85-residue polypeptide: Conotoxin Mi15b (85 aa).

Positions 1-23 (MEKLTVLILVAIVLLTIQVLGQS) are cleaved as a signal peptide. The propeptide occupies 24-49 (DRDKHPKRRPRQYATKRLSALMKGHR). Glutamine 50 carries the post-translational modification Pyrrolidone carboxylic acid.

The protein belongs to the conotoxin O2 superfamily. Post-translationally, contains 4 disulfide bonds. As to expression, expressed by the venom duct.

The protein resides in the secreted. The polypeptide is Conotoxin Mi15b (Conus miles (Soldier cone)).